The following is a 115-amino-acid chain: DNA-binding protein TV0008 (115 aa).

Positions Leu18 to Ile37 are disordered.

This sequence belongs to the PDCD5 family.

The chain is DNA-binding protein TV0008 from Thermoplasma volcanium (strain ATCC 51530 / DSM 4299 / JCM 9571 / NBRC 15438 / GSS1).